Reading from the N-terminus, the 102-residue chain is Aspartyl/glutamyl-tRNA(Asn/Gln) amidotransferase subunit C (102 aa).

Belongs to the GatC family. Heterotrimer of A, B and C subunits.

The catalysed reaction is L-glutamyl-tRNA(Gln) + L-glutamine + ATP + H2O = L-glutaminyl-tRNA(Gln) + L-glutamate + ADP + phosphate + H(+). It catalyses the reaction L-aspartyl-tRNA(Asn) + L-glutamine + ATP + H2O = L-asparaginyl-tRNA(Asn) + L-glutamate + ADP + phosphate + 2 H(+). Functionally, allows the formation of correctly charged Asn-tRNA(Asn) or Gln-tRNA(Gln) through the transamidation of misacylated Asp-tRNA(Asn) or Glu-tRNA(Gln) in organisms which lack either or both of asparaginyl-tRNA or glutaminyl-tRNA synthetases. The reaction takes place in the presence of glutamine and ATP through an activated phospho-Asp-tRNA(Asn) or phospho-Glu-tRNA(Gln). This Bordetella bronchiseptica (strain ATCC BAA-588 / NCTC 13252 / RB50) (Alcaligenes bronchisepticus) protein is Aspartyl/glutamyl-tRNA(Asn/Gln) amidotransferase subunit C.